Consider the following 803-residue polypeptide: Isoamylase 1, chloroplastic (803 aa).

Residues methionine 1–arginine 54 constitute a chloroplast transit peptide. Aspartate 432 acts as the Nucleophile in catalysis. The active-site Proton donor is glutamate 488.

The protein belongs to the glycosyl hydrolase 13 family. Forms a homo-pentamer and a hetero-hexamer composed of five ISA1 and one ISA2. Interacts with FLO6/SIP4. Highly expressed in developing endosperm. Expressed at low levels in leaves.

The protein resides in the plastid. It is found in the chloroplast. It carries out the reaction Hydrolysis of (1-&gt;6)-alpha-D-glucosidic branch linkages in glycogen, amylopectin and their beta-limit dextrins.. The protein operates within glycan biosynthesis; starch biosynthesis. Its activity is regulated as follows. Inhibited by copper chloride, mercury chloride, ammonium molybdate and para-chloromercuribenzoate. In terms of biological role, starch-debranching enzyme involved in amylopectin biosynthesis in endosperm. Functions by removing excess branches or improper branches that interfere with the formation of double helices of the cluster chains of amylopectin and crystallization of starch. Works as ISA1 homooligomer or together with ISA2 as heterooligomer. The heterooligomer ISA1 and ISA2 possesses higher affinity than the ISA1 homooligomer for various branched polyglucans in vitro, but no marked differences exist in chain preferences for debranching of amylopectin and phytoglycogen between these forms. In Oryza sativa subsp. japonica (Rice), this protein is Isoamylase 1, chloroplastic.